Here is a 356-residue protein sequence, read N- to C-terminus: Dihydroorotate dehydrogenase (quinone) (356 aa).

Residues 60-64 (AGFDK) and serine 84 contribute to the FMN site. Lysine 64 provides a ligand contact to substrate. 109–113 (NRFGF) lines the substrate pocket. FMN is bound by residues asparagine 140 and asparagine 171. Residue asparagine 171 coordinates substrate. The active-site Nucleophile is the serine 174. Substrate is bound at residue asparagine 176. Residues lysine 216 and glycine 244 each contribute to the FMN site. 245 to 246 (NT) is a binding site for substrate. FMN contacts are provided by residues glycine 267, glycine 296, and 317–318 (YS).

The protein belongs to the dihydroorotate dehydrogenase family. Type 2 subfamily. In terms of assembly, monomer. Requires FMN as cofactor.

It localises to the cell membrane. It carries out the reaction (S)-dihydroorotate + a quinone = orotate + a quinol. It functions in the pathway pyrimidine metabolism; UMP biosynthesis via de novo pathway; orotate from (S)-dihydroorotate (quinone route): step 1/1. Catalyzes the conversion of dihydroorotate to orotate with quinone as electron acceptor. This Azorhizobium caulinodans (strain ATCC 43989 / DSM 5975 / JCM 20966 / LMG 6465 / NBRC 14845 / NCIMB 13405 / ORS 571) protein is Dihydroorotate dehydrogenase (quinone).